A 378-amino-acid chain; its full sequence is Protein RecA (378 aa).

79 to 86 (GPESSGKT) is a binding site for ATP.

Belongs to the RecA family.

It localises to the cytoplasm. Can catalyze the hydrolysis of ATP in the presence of single-stranded DNA, the ATP-dependent uptake of single-stranded DNA by duplex DNA, and the ATP-dependent hybridization of homologous single-stranded DNAs. It interacts with LexA causing its activation and leading to its autocatalytic cleavage. This chain is Protein RecA, found in Streptococcus pyogenes serotype M12 (strain MGAS2096).